A 159-amino-acid polypeptide reads, in one-letter code: Ribosome maturation factor RimP (159 aa).

Belongs to the RimP family.

It localises to the cytoplasm. Required for maturation of 30S ribosomal subunits. The sequence is that of Ribosome maturation factor RimP from Streptococcus agalactiae serotype III (strain NEM316).